Here is a 748-residue protein sequence, read N- to C-terminus: Histone-lysine N-methyltransferase EZH2 (748 aa).

Positions 184-199 are enriched in acidic residues; it reads YEDDEDGDDNQDDEQD. Disordered regions lie at residues 184-220 and 342-428; these read YEDD…LRKF and AERI…NIEP. Positions 200-220 are enriched in basic and acidic residues; it reads DTAKDQDDNMEDKETQPLRKF. Residues 347 to 359 show a composition bias toward basic residues; the sequence is TPPKRPSGRRRGR. A compositionally biased stretch (polar residues) spans 362-374; it reads NNTSRPSTPTVNV. Over residues 376-387 the composition is skewed to basic and acidic residues; sequence EAKDTDSDREAG. The region spanning 505–607 is the CXC domain; that stretch reads CRKIQLKKDG…SKNVSCKNCS (103 aa). The region spanning 614–729 is the SET domain; sequence KHLLLAPSDV…TGEELFFDYR (116 aa).

The protein belongs to the class V-like SAM-binding methyltransferase superfamily. Histone-lysine methyltransferase family. EZ subfamily. Component of the prc2/eed-ezh2 complex.

Its subcellular location is the nucleus. It catalyses the reaction L-lysyl(27)-[histone H3] + 3 S-adenosyl-L-methionine = N(6),N(6),N(6)-trimethyl-L-lysyl(27)-[histone H3] + 3 S-adenosyl-L-homocysteine + 3 H(+). Polycomb group (PcG) protein. Catalytic subunit of the prc2/eed-ezh2 complex, which methylates 'Lys-9' and 'Lys-27' of histone H3, leading to transcriptional repression of the affected target gene. May repress transcription of the egr2 and en2 genes. May regulate the circadian clock via histone methylation at the promoter of the circadian genes. The polypeptide is Histone-lysine N-methyltransferase EZH2 (ezh2-a) (Xenopus laevis (African clawed frog)).